A 99-amino-acid chain; its full sequence is Malonate decarboxylase acyl carrier protein (99 aa).

O-(phosphoribosyl dephospho-coenzyme A)serine is present on S25.

This sequence belongs to the MdcC family. Post-translationally, covalently binds the prosthetic group of malonate decarboxylase.

The protein resides in the cytoplasm. Subunit of malonate decarboxylase, it is an acyl carrier protein to which acetyl and malonyl thioester residues are bound via a 2'-(5''-phosphoribosyl)-3'-dephospho-CoA prosthetic group and turn over during the catalytic mechanism. In Pseudomonas syringae pv. syringae (strain B728a), this protein is Malonate decarboxylase acyl carrier protein.